Reading from the N-terminus, the 220-residue chain is 7-cyano-7-deazaguanine synthase (220 aa).

Residue 11-21 coordinates ATP; sequence VSGGMDSVTLM. Cys186, Cys194, Cys197, and Cys200 together coordinate Zn(2+).

The protein belongs to the QueC family. It depends on Zn(2+) as a cofactor.

It catalyses the reaction 7-carboxy-7-deazaguanine + NH4(+) + ATP = 7-cyano-7-deazaguanine + ADP + phosphate + H2O + H(+). It participates in purine metabolism; 7-cyano-7-deazaguanine biosynthesis. Its function is as follows. Catalyzes the ATP-dependent conversion of 7-carboxy-7-deazaguanine (CDG) to 7-cyano-7-deazaguanine (preQ(0)). The polypeptide is 7-cyano-7-deazaguanine synthase (Porphyromonas gingivalis (strain ATCC 33277 / DSM 20709 / CIP 103683 / JCM 12257 / NCTC 11834 / 2561)).